The sequence spans 501 residues: Neuronal acetylcholine receptor subunit beta-2 (501 aa).

Residues 1-25 form the signal peptide; that stretch reads MARCSNSMALLFSFGLLWLCSGVLG. Residues 26-238 are Extracellular-facing; sequence TDTEERLVEH…IIRRKPLFYT (213 aa). Residues asparagine 51 and asparagine 168 are each glycosylated (N-linked (GlcNAc...) asparagine). Residues cysteine 155 and cysteine 169 are joined by a disulfide bond. Residues 239-259 form a helical membrane-spanning segment; sequence INLIIPCVLITSLAILVFYLP. Residues 260 to 267 are Cytoplasmic-facing; sequence SDCGEKMT. A helical membrane pass occupies residues 268-288; it reads LCISVLLALTVFLLLISKIVP. Over 289–300 the chain is Extracellular; the sequence is PTSLDVPLVGKY. A helical membrane pass occupies residues 301-321; the sequence is LMFTMVLVTFSIVTSVCVLNV. Over 322–459 the chain is Cytoplasmic; the sequence is HHRSPTTHTM…WKYVAMVIDR (138 aa). The helical transmembrane segment at 460–480 threads the bilayer; the sequence is LFLWIFVFVCVFGTIGMFLQP.

The protein belongs to the ligand-gated ion channel (TC 1.A.9) family. Acetylcholine receptor (TC 1.A.9.1) subfamily. Beta-2/CHRNB2 sub-subfamily. In terms of assembly, neuronal AChR is a heteropentamer composed of two different types of subunits: alpha and beta. CHRNB2/Beta-2 subunit can be combined to CHRNA2/alpha-2, CHRNA3/alpha-3 or CHRNA4/alpha-4, CHRNA5/alpha-5, CHRNA6/alpha-6 and CHRNB3/beta-3 to give rise to functional receptors. CHRNA2:CHRNB2 and CHRNA4:CHRNB2 nAChR complexes exist in two subtypes: LS (low agonist sensitivity) with a (CHRNA2/4)3:(CHRNB2)2 and HS (high agonist sensitivity) with a (CHRNA2/4)2:(CHRNB2)3 stoichiometry; the subtypes differ in their subunit binding interfaces which are involved in ligand binding. Cells produce predominantly an (CHRNA4)3:(CHRNB2)2 nAChR. The stoichiometric form (CHRNA4)2:(CHRNB2)3 expression is selectively up-regulated by nicotine and has lower single channel conductance and calcium permeability. Also part of the stoichiometric forms: (CHRNA4:CHRNB2)2:CHRNB3 or (CHRNA6:CHRNB2)2:CHRNB3. Can form heteropentamers with CHRNA7, mainly found in basal forebrain cholinergic neurons. Interacts with RIC3; which is required for proper folding and assembly. Interacts with LYPD6.

The protein localises to the synaptic cell membrane. Its subcellular location is the cell membrane. It catalyses the reaction K(+)(in) = K(+)(out). The catalysed reaction is Na(+)(in) = Na(+)(out). The enzyme catalyses Ca(2+)(in) = Ca(2+)(out). Its activity is regulated as follows. Activated by a myriad of ligands such as acetylcholine, cytisine, nicotine, choline and epibatidine. Channel potentiation by calcium is stoichiometry-selective, CHRNA4:CHRNB2 nACh receptor is achieved by calcium association with topographically distinct sites framed by anionic residues within the CHRNA4 subunit and between the CHRNA4 and CHRNB2 subunits. Oligomeric amyloid-beta protein 42 activates specifially CHRNA7:CHRNB2 nAchRs. nAChR activity is inhibited by the antagonist alpha-conotoxins BuIA, PnIA, PnIC, GID and MII, small disulfide-constrained peptides from cone snails. Component of neuronal acetylcholine receptors (nAChRs) that function as pentameric, ligand-gated cation channels with high calcium permeability among other activities. nAChRs are excitatory neurotrasnmitter receptors formed by a collection of nAChR subunits known to mediate synaptic transmission in the nervous system and the neuromuscular junction. Each nAchR subunit confers differential attributes to channel properties, including activation, deactivation and desensitization kinetics, pH sensitivity, cation permeability, and binding to allosteric modulators. CHRNB2 forms heteropentameric neuronal acetylcholine receptors with CHRNA2, CHRNA3, CHRNA4 and CHRNA6, as well as CHRNA5 and CHRNB3 as accesory subunits. Found in two major stoichiometric forms,(CHRNA4)3:(CHRNB2)2 and (CHRNA4)2:(CHRNB2)3, the two stoichiometric forms differ in their unitary conductance, calcium permeability, ACh sensitivity and potentiation by divalent cation. Heteropentameric channels with CHRNA6 and CHRNA4 exhibit high sensitivity to ACh and nicotine and are predominantly expressed in only a few brain areas, including dopaminergic neurons, norepirephrine neurons and cells of the visual system. nAChrs containing CHRNA6 subunits mediate endogenous cholinergic modulation of dopamine and gamma-aminobutyric acid (GABA) release in response to nicotine at nerve terminals. Also forms functional nAChRs with other subunits such as CHRNA7:CHRNB2, mainly expressed in basal forebrain cholinergic neurons. The sequence is that of Neuronal acetylcholine receptor subunit beta-2 (Chrnb2) from Mus musculus (Mouse).